Here is an 84-residue protein sequence, read N- to C-terminus: Large ribosomal subunit protein bL27 (84 aa).

The interval 1–21 is disordered; sequence MAHKKGGGSTKNGRDSNPKYL.

The protein belongs to the bacterial ribosomal protein bL27 family.

This chain is Large ribosomal subunit protein bL27, found in Pelodictyon phaeoclathratiforme (strain DSM 5477 / BU-1).